Consider the following 370-residue polypeptide: F-box/kelch-repeat protein At4g38940 (370 aa).

The F-box domain occupies Pro-18–Arg-64. Kelch repeat units lie at residues Asn-131 to Arg-177, Lys-178 to Gly-230, and Ser-263 to Gly-315.

Part of a SCF (ASK-cullin-F-box) protein ligase complex. Interacts with SKP1A/ASK1, SKP1B/ASK2, ASK11, ASK13 and ASK18.

The protein resides in the nucleus. It participates in protein modification; protein ubiquitination. Component of SCF(ASK-cullin-F-box) E3 ubiquitin ligase complexes, which may mediate the ubiquitination and subsequent proteasomal degradation of target proteins. This chain is F-box/kelch-repeat protein At4g38940, found in Arabidopsis thaliana (Mouse-ear cress).